A 1465-amino-acid polypeptide reads, in one-letter code: MGARGSVLSGKKTDELEKVRLRPGGKKKYMLKHVVWAVNELDRFGLAESLLESKEGCQKILKVLAPLVPTGSENLKSLFNIVCVIFCLHAEEKVKDTEEAKKIAQRHLAADTEKMPATNKPTAPPSGGNYPVQQLAGNYVHLPLSPRTLNAWVKLVEEKKFGAEVVPGFQALSEGCTPYDINQMLNCVGEHQAAMQIIREIINEEAADWDQQHPSPGPMPAGQLRDPRGSDIAGTTSTVEEQIQWMYRAQNPVPVGNIYRRWIQLGLQKCVRMYNPTNILDIKQGPKEPFQSYVDRFYKSLRAEQTDPAVKNWMTQTLLIQNANPDCKLVLKGLGMNPTLEEMLTACQGIGGPGQKARLMAEALKEALTPAPIPFAAVQQKAGKRGTVTCWNCGKQGHTARQCRAPRRQGCWKCGKTGHIMSKCPERQAGFLRVRTLGKEASQLPHDPSASGSDTICTPDEPSRGHDTSGGDTICAPCRSSSGDAEKLHADGETTEREPRETLQGGDRGFAAPQFSLWRRPVVKACIEGQSVEVLLDTGVDDSIVAGIELGSNYTPKIVGGIGGFINTKEYKDVEIEVVGKRVRATIMTGDTPINIFGRNILNTLGMTLNFPVAKVEPVKVELKPGKDGPKIRQWPLSREKILALKEICEKMEKEGQLEEAPPTNPYNTPTFAIKKKDKNKWRMLIDFRELNKVTQDFTEVNWVFPTRQVAEKRRITVIDVGDAYFSIPLDPNFRQYTAFTLPSVNNAEPGKRYIYKVLPQGWKGSQSICQYSMRKVLDPFRKANSDVIIIQYMDDILIASDRSDLEHDRVVSQLKELLNDMGFSTPEEKFQKDPPFKWMGYELWPKKWKLQKIQLPEKEVWTVNAIQKLVGVLNWAAQLFPGIKTRHICKLIRGKMTLTEEVQWTELAEAELQENKIILEQEQEGSYYKERVPLEATVQKNLANQWTYKIHQGNKVLKVGKYAKVKNTHTNGVRLLAHVVQKIGKEALVIWGEIPVFHLPVERETWDQWWTDYWQVTWIPEWDFVSTPPLIRLAYNLVKDPLEGRETYYTDGSCNRTSKEGKAGYVTDRGKDKVKVLEQTTNQQAELEAFALALTDSEPQVNIIVDSQYVMGIIAAQPTETESPIVAKIIEEMIKKEAVYVGWVPAHKGLGGNQEVDHLVSQGIRQVLFLEKIEPAQEEHEKYHGNVKELVHKFGIPQLVAKQIVNSCDKCQQKGEAIHGQVNADLGTWQMDCTHLEGKIIIVAVHVASGFIEAEVIPQETGRQTALFLLKLASRWPITHLHTDNGANFTSPSVKMVAWWVGIEQTFGVPYNPQSQGVVEAMNHHLKNQIDRLRDQAVSIETVVLMATHCMNFKRRGGIGDMTPAERLVNMITTEQEIQFFQAKNLKFQNFQVYYREGRDQLWKGPGELLWKGEGAVIIKVGTEIKVVPRRKAKIIRHYGGGKGLDCSADMEDTRQAREMAQSD.

A lipid anchor (N-myristoyl glycine; by host) is attached at Gly-2. The interaction with Gp41 stretch occupies residues 7–31 (VLSGKKTDELEKVRLRPGGKKKYML). A Nuclear export signal motif is present at residues 16 to 22 (LEKVRLR). The Nuclear localization signal signature appears at 26–32 (KKKYMLK). Residues 105-114 (QRHLAADTEK) are compositionally biased toward basic and acidic residues. The segment at 105 to 129 (QRHLAADTEKMPATNKPTAPPSGGN) is disordered. Tyr-130 bears the Phosphotyrosine; by host mark. An interaction with human PPIA/CYPA and NUP153 region spans residues 186–223 (NCVGEHQAAMQIIREIINEEAADWDQQHPSPGPMPAGQ). Residues 274 to 360 (YNPTNILDIK…GGPGQKARLM (87 aa)) are dimerization/Multimerization of capsid protein p24. 2 consecutive CCHC-type zinc fingers follow at residues 388 to 405 (VTCW…QCRA) and 409 to 426 (QGCW…KCPE). The tract at residues 441–508 (ASQLPHDPSA…PRETLQGGDR (68 aa)) is disordered. A compositionally biased stretch (basic and acidic residues) spans 484-501 (DAEKLHADGETTEREPRE). The segment at 513 to 517 (PQFSL) is dimerization of protease. Residues 532–601 (VEVLLDTGVD…TPINIFGRNI (70 aa)) enclose the Peptidase A2 domain. Asp-537 acts as the For protease activity; shared with dimeric partner in catalysis. Dimerization of protease regions lie at residues 561 to 567 (GIGGFIN) and 600 to 612 (NILN…LNFP). The 190-residue stretch at 655–844 (EGQLEEAPPT…PPFKWMGYEL (190 aa)) folds into the Reverse transcriptase domain. Mg(2+) is bound by residues Asp-720, Asp-795, and Asp-796. An RT 'primer grip' region spans residues 837–845 (FKWMGYELW). The short motif at 1007–1023 (WDQWWTDYWQVTWIPEW) is the Tryptophan repeat motif element. One can recognise an RNase H type-1 domain in the interval 1043-1166 (LEGRETYYTD…VDHLVSQGIR (124 aa)). Residues Asp-1052, Glu-1087, Asp-1107, and Asp-1158 each contribute to the Mg(2+) site. The Integrase-type zinc-finger motif lies at 1172–1213 (EKIEPAQEEHEKYHGNVKELVHKFGIPQLVAKQIVNSCDKCQ). Residues His-1181, His-1185, Cys-1209, and Cys-1212 each contribute to the Zn(2+) site. In terms of domain architecture, Integrase catalytic spans 1222 to 1373 (QVNADLGTWQ…TPAERLVNMI (152 aa)). 3 residues coordinate Mg(2+): Asp-1233, Asp-1285, and Glu-1321. Residues 1392–1439 (FQVYYREGRDQLWKGPGELLWKGEGAVIIKVGTEIKVVPRRKAKIIRH) constitute a DNA-binding region (integrase-type).

Homotrimer; further assembles as hexamers of trimers. Interacts with gp41 (via C-terminus). Interacts with host CALM1; this interaction induces a conformational change in the Matrix protein, triggering exposure of the myristate group. Interacts with host AP3D1; this interaction allows the polyprotein trafficking to multivesicular bodies during virus assembly. Part of the pre-integration complex (PIC) which is composed of viral genome, matrix protein, Vpr and integrase. In terms of assembly, homodimer; the homodimer further multimerizes as homohexamers or homopentamers. Interacts with human PPIA/CYPA. Interacts with human NUP153. Interacts with host PDZD8; this interaction stabilizes the capsid. Interacts with monkey TRIM5; this interaction destabilizes the capsid. As to quaternary structure, homodimer, whose active site consists of two apposed aspartic acid residues. Heterodimer of p66 RT and p51 RT (RT p66/p51). Heterodimerization of RT is essential for DNA polymerase activity. The overall folding of the subdomains is similar in p66 RT and p51 RT but the spatial arrangements of the subdomains are dramatically different. In terms of assembly, homotetramer; may further associate as a homohexadecamer. Part of the pre-integration complex (PIC) which is composed of viral genome, matrix protein, Vpr and integrase. Interacts with human SMARCB1/INI1 and human PSIP1/LEDGF isoform 1. Interacts with human KPNA3; this interaction might play a role in nuclear import of the pre-integration complex. Interacts with human NUP153; this interaction might play a role in nuclear import of the pre-integration complex. It depends on Mg(2+) as a cofactor. In terms of processing, specific enzymatic cleavages by the viral protease yield mature proteins. The protease is released by autocatalytic cleavage. The polyprotein is cleaved during and after budding, this process is termed maturation. Proteolytic cleavage of p66 RT removes the RNase H domain to yield the p51 RT subunit. Nucleocapsid protein p7 might be further cleaved after virus entry.

The protein localises to the host cell membrane. Its subcellular location is the host endosome. It localises to the host multivesicular body. It is found in the virion membrane. The protein resides in the host nucleus. The protein localises to the host cytoplasm. Its subcellular location is the virion. It catalyses the reaction Endopeptidase for which the P1 residue is preferably hydrophobic.. The enzyme catalyses Endohydrolysis of RNA in RNA/DNA hybrids. Three different cleavage modes: 1. sequence-specific internal cleavage of RNA. Human immunodeficiency virus type 1 and Moloney murine leukemia virus enzymes prefer to cleave the RNA strand one nucleotide away from the RNA-DNA junction. 2. RNA 5'-end directed cleavage 13-19 nucleotides from the RNA end. 3. DNA 3'-end directed cleavage 15-20 nucleotides away from the primer terminus.. It carries out the reaction 3'-end directed exonucleolytic cleavage of viral RNA-DNA hybrid.. The catalysed reaction is DNA(n) + a 2'-deoxyribonucleoside 5'-triphosphate = DNA(n+1) + diphosphate. With respect to regulation, protease: The viral protease is inhibited by many synthetic protease inhibitors (PIs), such as amprenavir, atazanavir, indinavir, loprinavir, nelfinavir, ritonavir and saquinavir. Use of protease inhibitors in tritherapy regimens permit more ambitious therapeutic strategies. Reverse transcriptase/ribonuclease H: RT can be inhibited either by nucleoside RT inhibitors (NRTIs) or by non nucleoside RT inhibitors (NNRTIs). NRTIs act as chain terminators, whereas NNRTIs inhibit DNA polymerization by binding a small hydrophobic pocket near the RT active site and inducing an allosteric change in this region. Classical NRTIs are abacavir, adefovir (PMEA), didanosine (ddI), lamivudine (3TC), stavudine (d4T), tenofovir (PMPA), zalcitabine (ddC), and zidovudine (AZT). Classical NNRTIs are atevirdine (BHAP U-87201E), delavirdine, efavirenz (DMP-266), emivirine (I-EBU), and nevirapine (BI-RG-587). The tritherapies used as a basic effective treatment of AIDS associate two NRTIs and one NNRTI. Mediates, with Gag polyprotein, the essential events in virion assembly, including binding the plasma membrane, making the protein-protein interactions necessary to create spherical particles, recruiting the viral Env proteins, and packaging the genomic RNA via direct interactions with the RNA packaging sequence (Psi). Gag-Pol polyprotein may regulate its own translation, by the binding genomic RNA in the 5'-UTR. At low concentration, the polyprotein would promote translation, whereas at high concentration, the polyprotein would encapsidate genomic RNA and then shut off translation. Functionally, targets the polyprotein to the plasma membrane via a multipartite membrane-binding signal, that includes its myristoylated N-terminus. Matrix protein is part of the pre-integration complex. Implicated in the release from host cell mediated by Vpu. Binds to RNA. Its function is as follows. Forms the conical core that encapsulates the genomic RNA-nucleocapsid complex in the virion. Most core are conical, with only 7% tubular. The core is constituted by capsid protein hexamer subunits. The core is disassembled soon after virion entry. Host restriction factors such as TRIM5-alpha or TRIMCyp bind retroviral capsids and cause premature capsid disassembly, leading to blocks in reverse transcription. Capsid restriction by TRIM5 is one of the factors which restricts HIV-1 to the human species. Host PIN1 apparently facilitates the virion uncoating. On the other hand, interactions with PDZD8 or CYPA stabilize the capsid. In terms of biological role, encapsulates and protects viral dimeric unspliced genomic RNA (gRNA). Binds these RNAs through its zinc fingers. Acts as a nucleic acid chaperone which is involved in rearangement of nucleic acid secondary structure during gRNA retrotranscription. Also facilitates template switch leading to recombination. As part of the polyprotein, participates in gRNA dimerization, packaging, tRNA incorporation and virion assembly. Aspartyl protease that mediates proteolytic cleavages of Gag and Gag-Pol polyproteins during or shortly after the release of the virion from the plasma membrane. Cleavages take place as an ordered, step-wise cascade to yield mature proteins. This process is called maturation. Displays maximal activity during the budding process just prior to particle release from the cell. Also cleaves Nef and Vif, probably concomitantly with viral structural proteins on maturation of virus particles. Hydrolyzes host EIF4GI and PABP1 in order to shut off the capped cellular mRNA translation. The resulting inhibition of cellular protein synthesis serves to ensure maximal viral gene expression and to evade host immune response. Functionally, multifunctional enzyme that converts the viral RNA genome into dsDNA in the cytoplasm, shortly after virus entry into the cell. This enzyme displays a DNA polymerase activity that can copy either DNA or RNA templates, and a ribonuclease H (RNase H) activity that cleaves the RNA strand of RNA-DNA heteroduplexes in a partially processive 3' to 5' endonucleasic mode. Conversion of viral genomic RNA into dsDNA requires many steps. A tRNA(3)-Lys binds to the primer-binding site (PBS) situated at the 5'-end of the viral RNA. RT uses the 3' end of the tRNA primer to perform a short round of RNA-dependent minus-strand DNA synthesis. The reading proceeds through the U5 region and ends after the repeated (R) region which is present at both ends of viral RNA. The portion of the RNA-DNA heteroduplex is digested by the RNase H, resulting in a ssDNA product attached to the tRNA primer. This ssDNA/tRNA hybridizes with the identical R region situated at the 3' end of viral RNA. This template exchange, known as minus-strand DNA strong stop transfer, can be either intra- or intermolecular. RT uses the 3' end of this newly synthesized short ssDNA to perform the RNA-dependent minus-strand DNA synthesis of the whole template. RNase H digests the RNA template except for two polypurine tracts (PPTs) situated at the 5'-end and near the center of the genome. It is not clear if both polymerase and RNase H activities are simultaneous. RNase H probably can proceed both in a polymerase-dependent (RNA cut into small fragments by the same RT performing DNA synthesis) and a polymerase-independent mode (cleavage of remaining RNA fragments by free RTs). Secondly, RT performs DNA-directed plus-strand DNA synthesis using the PPTs that have not been removed by RNase H as primers. PPTs and tRNA primers are then removed by RNase H. The 3' and 5' ssDNA PBS regions hybridize to form a circular dsDNA intermediate. Strand displacement synthesis by RT to the PBS and PPT ends produces a blunt ended, linear dsDNA copy of the viral genome that includes long terminal repeats (LTRs) at both ends. Its function is as follows. Catalyzes viral DNA integration into the host chromosome, by performing a series of DNA cutting and joining reactions. This enzyme activity takes place after virion entry into a cell and reverse transcription of the RNA genome in dsDNA. The first step in the integration process is 3' processing. This step requires a complex comprising the viral genome, matrix protein, Vpr and integrase. This complex is called the pre-integration complex (PIC). The integrase protein removes 2 nucleotides from each 3' end of the viral DNA, leaving recessed CA OH's at the 3' ends. In the second step, the PIC enters cell nucleus. This process is mediated through integrase and Vpr proteins, and allows the virus to infect a non dividing cell. This ability to enter the nucleus is specific of lentiviruses, other retroviruses cannot and rely on cell division to access cell chromosomes. In the third step, termed strand transfer, the integrase protein joins the previously processed 3' ends to the 5' ends of strands of target cellular DNA at the site of integration. The 5'-ends are produced by integrase-catalyzed staggered cuts, 5 bp apart. A Y-shaped, gapped, recombination intermediate results, with the 5'-ends of the viral DNA strands and the 3' ends of target DNA strands remaining unjoined, flanking a gap of 5 bp. The last step is viral DNA integration into host chromosome. This involves host DNA repair synthesis in which the 5 bp gaps between the unjoined strands are filled in and then ligated. Since this process occurs at both cuts flanking the HIV genome, a 5 bp duplication of host DNA is produced at the ends of HIV-1 integration. Alternatively, Integrase may catalyze the excision of viral DNA just after strand transfer, this is termed disintegration. The polypeptide is Gag-Pol polyprotein (gag-pol) (Human immunodeficiency virus type 2 subtype B (isolate D205) (HIV-2)).